A 243-amino-acid chain; its full sequence is Max-interacting protein 1 (243 aa).

The bHLH domain occupies 76 to 128 (HYRSTHNELEKNRRAHLRLCLERLKTLIPLGPECSRHTTLGLLNKAKAHIKKL). Positions 164 to 235 (EAERIRTDSM…TASDEGYSSC (72 aa)) are disordered. Positions 188 to 198 (DQEEMEVDVES) are enriched in acidic residues. Residues 222-235 (SLQSTASDEGYSSC) show a composition bias toward polar residues.

Efficient DNA binding requires dimerization with another bHLH protein. Binds DNA as a heterodimer with MAX.

It localises to the nucleus. Transcriptional repressor. MXI1 binds with MAX to form a sequence-specific DNA-binding protein complex which recognizes the core sequence 5'-CAC[GA]TG-3'. MXI1 thus antagonizes MYC transcriptional activity by competing for MAX. The chain is Max-interacting protein 1 (mxi1) from Danio rerio (Zebrafish).